A 130-amino-acid chain; its full sequence is Small ribosomal subunit protein uS8 (130 aa).

It belongs to the universal ribosomal protein uS8 family. Part of the 30S ribosomal subunit. Contacts proteins S5 and S12.

One of the primary rRNA binding proteins, it binds directly to 16S rRNA central domain where it helps coordinate assembly of the platform of the 30S subunit. The polypeptide is Small ribosomal subunit protein uS8 (Yersinia pseudotuberculosis serotype O:1b (strain IP 31758)).